The sequence spans 264 residues: Cell division protein DivIB (264 aa).

Residues 1 to 23 (MAVYEERIPQVKQQRPRRRGNRK) are Cytoplasmic-facing. A helical membrane pass occupies residues 24–44 (LVFLLVLFFLTILIIVFIRSP). Residues 45–264 (YSKVQEIRVT…GQEQPQQPQQ (220 aa)) are Extracellular-facing. One can recognise a POTRA domain in the interval 46–114 (SKVQEIRVTG…GLITLHITEQ (69 aa)).

It belongs to the FtsQ/DivIB family. DivIB subfamily.

It localises to the cell membrane. In terms of biological role, cell division protein that may be involved in stabilizing or promoting the assembly of the division complex. The sequence is that of Cell division protein DivIB from Brevibacillus brevis (strain 47 / JCM 6285 / NBRC 100599).